The following is a 306-amino-acid chain: 2-phosphoglycerate kinase (306 aa).

An ATP-cone domain is found at 1–90; the sequence is MIMVQGEVSG…LWRKIRQCKE (90 aa).

This sequence belongs to the 2-phosphoglycerate kinase family. The cofactor is a divalent metal cation.

The catalysed reaction is (2R)-2-phosphoglycerate + ATP = (2R)-2,3-bisphosphoglycerate + ADP + H(+). It functions in the pathway thermoadapter biosynthesis; cyclic 2,3-diphosphoglycerate biosynthesis; cyclic 2,3-diphosphoglycerate from 2-phospho-D-glycerate: step 1/2. Its function is as follows. Catalyzes the phosphorylation of 2-phosphoglycerate to 2,3-diphosphoglycerate. Involved in the biosynthesis of cyclic 2,3-bisphosphoglycerate, a thermoprotectant. The chain is 2-phosphoglycerate kinase from Methanothermobacter thermautotrophicus (strain ATCC 29096 / DSM 1053 / JCM 10044 / NBRC 100330 / Delta H) (Methanobacterium thermoautotrophicum).